The sequence spans 203 residues: Probable proteasome subunit beta type-4 (203 aa).

It belongs to the peptidase T1B family. The 26S proteasome consists of a 20S proteasome core and two 19S regulatory subunits. The 20S proteasome core is composed of 28 subunits that are arranged in four stacked rings, resulting in a barrel-shaped structure. The two end rings are each formed by seven alpha subunits, and the two central rings are each formed by seven beta subunits. The catalytic chamber with the active sites is on the inside of the barrel.

The protein resides in the cytoplasm. The protein localises to the nucleus. Non-catalytic component of the proteasome, a multicatalytic proteinase complex which is characterized by its ability to cleave peptides with Arg, Phe, Tyr, Leu, and Glu adjacent to the leaving group at neutral or slightly basic pH. The proteasome has an ATP-dependent proteolytic activity. In Neurospora crassa (strain ATCC 24698 / 74-OR23-1A / CBS 708.71 / DSM 1257 / FGSC 987), this protein is Probable proteasome subunit beta type-4 (pcb-4).